The chain runs to 218 residues: Small ribosomal subunit protein uS3c (218 aa).

Residues 47 to 118 form the KH type-2 domain; it reads VRKHIKSSSN…KLRMALTEVE (72 aa).

The protein belongs to the universal ribosomal protein uS3 family. In terms of assembly, part of the 30S ribosomal subunit.

It localises to the plastid. It is found in the chloroplast. The protein is Small ribosomal subunit protein uS3c (rps3) of Anthoceros angustus (Hornwort).